Here is a 254-residue protein sequence, read N- to C-terminus: MDKGKSVKSTEKSVGMPPKTPKTDNNAHVDNEFLILQVNDAVFPIGSYTHSFGLETYIQQKKVTNKESALEYLKANLSSQFLYTEMLSLKLTYESALQQDLKKILGVEEVIMLSTSPMELRLANQKLGNRFIKTLQAMNELDMGEFFNAYAQKTKDPTHATSYGVFAASLGIELKKALRHYLYAQTSNMVINCVKSVPLSQNDGQKILLSLQSPFNQLIEKTLELDESHLCTASVQNDIKAMQHESLYSRLYMS.

Residues 1–11 are compositionally biased toward basic and acidic residues; sequence MDKGKSVKSTE. The tract at residues 1 to 26 is disordered; sequence MDKGKSVKSTEKSVGMPPKTPKTDNN.

The protein belongs to the UreF family. UreH, UreF and UreG form a complex that acts as a GTP-hydrolysis-dependent molecular chaperone, activating the urease apoprotein by helping to assemble the nickel containing metallocenter of UreC. The UreE protein probably delivers the nickel.

Its subcellular location is the cytoplasm. Its function is as follows. Required for maturation of urease via the functional incorporation of the urease nickel metallocenter. This is Urease accessory protein UreF from Helicobacter pylori (strain ATCC 700392 / 26695) (Campylobacter pylori).